A 335-amino-acid polypeptide reads, in one-letter code: Zinc finger protein CO3 (335 aa).

Residues Cys15, Cys18, Cys38, and His43 each coordinate Zn(2+). Residues 15–57 (CDSCRSAPCAFYCLADSAALCATCDADVHSVNPLARRHRRVPM) form a B box-type; atypical zinc finger. The segment at 141–179 (AGEKEDASSSKDCSSSHGKSSEGSHEFAVPGEPVPERQG) is disordered. Residues 268-310 (REARVHRYREKRKTRRFEKTIRYASRKAYAETRPRIKGRFAKR) enclose the CCT domain.

The protein belongs to the CONSTANS family.

The protein localises to the nucleus. In terms of biological role, probable transcription factor involved in the regulation of flowering time under short day (SD) conditions. Functions as a repressor of flowering under SD conditions, independently of HD1, EHD1, MADS50 and MADS51. Controls flowering time under SD conditions by negatively regulating the expression of HD3A and FTL. The protein is Zinc finger protein CO3 of Oryza sativa subsp. japonica (Rice).